Reading from the N-terminus, the 378-residue chain is Alanine racemase (378 aa).

Lys40 acts as the Proton acceptor; specific for D-alanine in catalysis. An N6-(pyridoxal phosphate)lysine modification is found at Lys40. Arg140 serves as a coordination point for substrate. Tyr270 functions as the Proton acceptor; specific for L-alanine in the catalytic mechanism. Position 317 (Met317) interacts with substrate.

This sequence belongs to the alanine racemase family. The cofactor is pyridoxal 5'-phosphate.

The catalysed reaction is L-alanine = D-alanine. It participates in amino-acid biosynthesis; D-alanine biosynthesis; D-alanine from L-alanine: step 1/1. Catalyzes the interconversion of L-alanine and D-alanine. May also act on other amino acids. This chain is Alanine racemase (alr), found in Lacticaseibacillus casei (strain BL23) (Lactobacillus casei).